Here is a 65-residue protein sequence, read N- to C-terminus: Conotoxin Lt5.1 (65 aa).

The signal sequence occupies residues 1 to 19 (MRCLPVFIILLLLIPSAPS). Positions 20-48 (VDAQRKTKDDVPLASFHDNAKRTLKRLWN) are excised as a propeptide.

This sequence belongs to the conotoxin T superfamily. Post-translationally, contains 2 disulfide bonds that can be either 'C1-C3, C2-C4' or 'C1-C4, C2-C3', since these disulfide connectivities have been observed for conotoxins with cysteine framework V (for examples, see AC P0DQQ7 and AC P81755). As to expression, expressed by the venom duct.

It is found in the secreted. The polypeptide is Conotoxin Lt5.1 (Conus litteratus (Lettered cone)).